Here is a 454-residue protein sequence, read N- to C-terminus: (Z)-3-hexen-1-ol acetyltransferase (454 aa).

Active-site proton acceptor residues include His-174 and Asp-389.

It belongs to the plant acyltransferase family. Expressed in leaves and stems. Lower levels in flowers and barely detected in roots and siliques.

It carries out the reaction (3Z)-hex-3-en-1-ol + acetyl-CoA = (3Z)-hex-3-en-1-yl acetate + CoA. With respect to regulation, inhibited by magnesium, calcium, cobalt, zinc and copper. Its function is as follows. Acyltransferase involved in the production of green leaf volatiles (GLVs). Uses acetyl-CoA as substrate, but not malonyl-CoA or benzoyl-CoA. Prefers primary, medium-chain-length, aliphatic alcohols. This Arabidopsis thaliana (Mouse-ear cress) protein is (Z)-3-hexen-1-ol acetyltransferase (CHAT).